The chain runs to 141 residues: Large ribosomal subunit protein uL11 (141 aa).

It belongs to the universal ribosomal protein uL11 family. In terms of assembly, part of the ribosomal stalk of the 50S ribosomal subunit. Interacts with L10 and the large rRNA to form the base of the stalk. L10 forms an elongated spine to which L12 dimers bind in a sequential fashion forming a multimeric L10(L12)X complex. In terms of processing, one or more lysine residues are methylated.

Its function is as follows. Forms part of the ribosomal stalk which helps the ribosome interact with GTP-bound translation factors. The protein is Large ribosomal subunit protein uL11 of Thermomicrobium roseum (strain ATCC 27502 / DSM 5159 / P-2).